The chain runs to 145 residues: Small ribosomal subunit protein uS9 (145 aa).

Belongs to the universal ribosomal protein uS9 family.

It is found in the cytoplasm. This chain is Small ribosomal subunit protein uS9 (RPS16), found in Fritillaria agrestis (Stinkbells).